The primary structure comprises 388 residues: P2X purinoceptor 4 (388 aa).

Over 1–33 (MAGCCAALAAFLFEYDTPRIVLIRSRKVGLMNR) the chain is Cytoplasmic. The helical transmembrane segment at 34-54 (AVQLLILAYVIGWVFVWEKGY) threads the bilayer. Topologically, residues 55–338 (QETDSVVSSV…KFDIIPTMIN (284 aa)) are extracellular. Residues lysine 67 and lysine 69 each coordinate ATP. Positions 67 and 69 each coordinate CTP. N-linked (GlcNAc...) asparagine glycosylation is found at asparagine 75 and asparagine 110. 3 disulfides stabilise this stretch: cysteine 116/cysteine 165, cysteine 126/cysteine 149, and cysteine 132/cysteine 159. N-linked (GlcNAc...) asparagine glycans are attached at residues asparagine 153 and asparagine 184. 2 residues coordinate ATP: threonine 186 and leucine 188. Threonine 186 contributes to the CTP binding site. Residues asparagine 199 and asparagine 208 are each glycosylated (N-linked (GlcNAc...) asparagine). 2 cysteine pairs are disulfide-bonded: cysteine 217–cysteine 227 and cysteine 261–cysteine 270. Positions 293, 295, and 313 each coordinate ATP. Residues asparagine 293, arginine 295, and lysine 313 each contribute to the CTP site. Residues 339 to 359 (IGSGLALLGMATVLCDIIVLY) form a helical membrane-spanning segment. The Cytoplasmic portion of the chain corresponds to 360 to 388 (CMKKRLYYREKKYKYVEDYEQGLASELDQ).

This sequence belongs to the P2X receptor family. Functional P2RXs are organized as homomeric and heteromeric trimers. Forms heterotrimer with P2RX1. Interacts with P2RX7 (via C-terminus); this interaction is functional only in the presence of ATP. Forms heterotrimer with P2RX4; functional differences between homomeric P2RX4 and P2RX4/6 heterotrimer are minor. Interacts with AP1M2.

The protein resides in the cell membrane. Its subcellular location is the lysosome membrane. The enzyme catalyses K(+)(in) = K(+)(out). It catalyses the reaction Na(+)(in) = Na(+)(out). The catalysed reaction is Ca(2+)(in) = Ca(2+)(out). With respect to regulation, activated by ATP. pH-dependent and inhibited by acidic pH. In terms of biological role, ATP-gated nonselective transmembrane cation channel permeable to potassium, sodium and calcium. CTP, but not GTP or UTP, functions as a weak affinity agonist for P2RX4. Activated by extracellularly released ATP, it plays multiple role in immunity and central nervous system physiology. Plays a key role in initial steps of T-cell activation and Ca(2+) microdomain formation. Also participates in basal T-cell activity without TCR/CD3 stimulation. Promotes the differentiation and activation of Th17 cells via expression of retinoic acid-related orphan receptor C/RORC. Upon activation, drives microglia motility via the PI3K/Akt pathway. Could also function as an ATP-gated cation channel of lysosomal membranes. The sequence is that of P2X purinoceptor 4 (P2RX4) from Homo sapiens (Human).